A 182-amino-acid chain; its full sequence is Keratin, type II cytoskeletal 60 kDa, component III (182 aa).

The IF rod domain maps to 1-63; it reads ERGELALKDA…KLLEGEECRL (63 aa). The tract at residues 1-63 is coil 2; that stretch reads ERGELALKDA…KLLEGEECRL (63 aa). A tail region spans residues 63 to 182; it reads LSGEGVGPVN…TSSSRKSFKS (120 aa). The segment at 157–182 is disordered; that stretch reads FGSGGGSSSSVKFVSTTSSSRKSFKS. Residues 164–182 are compositionally biased toward low complexity; it reads SSSVKFVSTTSSSRKSFKS.

It belongs to the intermediate filament family. Heterotetramer of two type I and two type II keratins.

In Bos taurus (Bovine), this protein is Keratin, type II cytoskeletal 60 kDa, component III.